Consider the following 145-residue polypeptide: Nucleoside diphosphate kinase (145 aa).

6 residues coordinate ATP: Lys-11, Phe-59, Arg-87, Thr-93, Arg-104, and Asn-114. His-117 (pros-phosphohistidine intermediate) is an active-site residue.

The protein belongs to the NDK family. It depends on Mg(2+) as a cofactor.

Its subcellular location is the cytoplasm. The enzyme catalyses a 2'-deoxyribonucleoside 5'-diphosphate + ATP = a 2'-deoxyribonucleoside 5'-triphosphate + ADP. The catalysed reaction is a ribonucleoside 5'-diphosphate + ATP = a ribonucleoside 5'-triphosphate + ADP. Major role in the synthesis of nucleoside triphosphates other than ATP. The ATP gamma phosphate is transferred to the NDP beta phosphate via a ping-pong mechanism, using a phosphorylated active-site intermediate. This Sulfolobus acidocaldarius (strain ATCC 33909 / DSM 639 / JCM 8929 / NBRC 15157 / NCIMB 11770) protein is Nucleoside diphosphate kinase.